Here is a 310-residue protein sequence, read N- to C-terminus: Malonyl CoA-acyl carrier protein transacylase (310 aa).

Active-site residues include S93 and H201.

Belongs to the FabD family.

The catalysed reaction is holo-[ACP] + malonyl-CoA = malonyl-[ACP] + CoA. The protein operates within lipid metabolism; fatty acid biosynthesis. This chain is Malonyl CoA-acyl carrier protein transacylase (fabD), found in Buchnera aphidicola subsp. Schizaphis graminum (strain Sg).